Reading from the N-terminus, the 942-residue chain is Protein translocase subunit SecA (942 aa).

Residues Gln90, 108–112 (GEGKT), and Asp509 contribute to the ATP site.

Belongs to the SecA family. Monomer and homodimer. Part of the essential Sec protein translocation apparatus which comprises SecA, SecYEG and auxiliary proteins SecDF. Other proteins may also be involved.

It is found in the cell inner membrane. The protein resides in the cellular thylakoid membrane. The protein localises to the cytoplasm. The catalysed reaction is ATP + H2O + cellular proteinSide 1 = ADP + phosphate + cellular proteinSide 2.. Functionally, part of the Sec protein translocase complex. Interacts with the SecYEG preprotein conducting channel. Has a central role in coupling the hydrolysis of ATP to the transfer of proteins into and across the cell membrane, serving as an ATP-driven molecular motor driving the stepwise translocation of polypeptide chains across the membrane. Its function is as follows. Probably participates in protein translocation into and across both the cytoplasmic and thylakoid membranes in cyanobacterial cells. The protein is Protein translocase subunit SecA of Prochlorococcus marinus (strain NATL2A).